The following is a 315-amino-acid chain: Transcription repressor OFP7 (315 aa).

The interval 113 to 183 is disordered; sequence YETPRRKIYN…ELPRVTRRPR (71 aa). Residues 130-145 are compositionally biased toward basic residues; sequence RRRLKKKEKSNSRRRG. A compositionally biased stretch (polar residues) spans 160–174; sequence LPSSTNLSPEYSSSE. An OVATE domain is found at 230 to 289; it reads VVKKSEDPYEDFKGSMMEMIVEKKMFEVAELEQLLSCFLSLNAKRHHRAIVRAFSEIWVA.

As to expression, expressed in roots, shoots, stems, flower buds and siliques.

Its subcellular location is the nucleus. Functionally, transcriptional repressor that regulates multiple aspects of plant growth and development through the regulation of BEL1-LIKE (BLH) and KNOX TALE (KNAT) homeodomain transcription factors. This is Transcription repressor OFP7 (OFP7) from Arabidopsis thaliana (Mouse-ear cress).